The chain runs to 253 residues: Small ribosomal subunit protein uS3 (253 aa).

One can recognise a KH type-2 domain in the interval 39 to 107 (VRRALKKRLY…EVHLNIVEIR (69 aa)). Residues 215 to 253 (LDKRLAGESGPAGEGGGRERGDRPDRGPRRERRGEPSNA) are disordered. Positions 230 to 253 (GGRERGDRPDRGPRRERRGEPSNA) are enriched in basic and acidic residues.

It belongs to the universal ribosomal protein uS3 family. As to quaternary structure, part of the 30S ribosomal subunit. Forms a tight complex with proteins S10 and S14.

Binds the lower part of the 30S subunit head. Binds mRNA in the 70S ribosome, positioning it for translation. This Phenylobacterium zucineum (strain HLK1) protein is Small ribosomal subunit protein uS3.